A 71-amino-acid chain; its full sequence is Protein SlyX homolog (71 aa).

This sequence belongs to the SlyX family.

The protein is Protein SlyX homolog of Thioalkalivibrio sulfidiphilus (strain HL-EbGR7).